A 609-amino-acid polypeptide reads, in one-letter code: Zinc metalloproteinase-disintegrin-like VAP2B (609 aa).

The signal sequence occupies residues 1 to 20 (MIQVLLVTICLAAFPYQGSS). Residues 21–189 (IILESGNVND…KKASQLVVTA (169 aa)) constitute a propeptide that is removed on maturation. Position 190 is a pyrrolidone carboxylic acid (Glu) (E190). One can recognise a Peptidase M12B domain in the interval 198-393 (RFVELFLVVD…HNPECILNEP (196 aa)). 2 residues coordinate Ca(2+): E201 and D285. Cystine bridges form between C308/C388, C348/C372, and C350/C355. H333 provides a ligand contact to Zn(2+). E334 is a catalytic residue. Zn(2+) contacts are provided by H337 and H343. A glycan (N-linked (GlcNAc...) asparagine) is linked at N371. Ca(2+) is bound by residues C388, N391, V403, N406, L408, E410, E413, and D416. Positions 401-487 (PPVCGNELLE…ECPADVFHKN (87 aa)) constitute a Disintegrin domain. 22 disulfide bridges follow: C404/C423, C404/C433, C415/C428, C415/C433, C417/C423, C427/C450, C441/C447, C446/C472, C459/C479, C466/C491, C466/C498, C491/C503, C498/C503, C510/C525, C510/C560, C525/C571, C538/C548, C548/C555, C555/C597, C560/C571, C591/C602, and C597/C602. The segment at 459–472 (CRASMSECDPAEHC) is inhibits platelet aggregation. Positions 465-467 (ECD) match the D/ECD-tripeptide motif. Positions 467, 468, 470, 482, and 483 each coordinate Ca(2+).

This sequence belongs to the venom metalloproteinase (M12B) family. P-III subfamily. P-IIIb sub-subfamily. In terms of assembly, monomer or heterodimer; non-covalently linked. Interacts with fibrillar collagen. Requires Zn(2+) as cofactor. In terms of processing, the N-terminus is blocked. As to expression, expressed by the venom gland.

It localises to the secreted. Functionally, zinc metalloprotease that abolishes platelet aggregation induced by collagen, but has no effect on platelet aggregation induced by ADP or thromboxane analog. This inhibition may be due to its ability to bind collagen and block the binding site on collagen for platelets and/or to its ability to bind to the platelet alpha-2/beta-1 collagen receptor (ITGA2/ITGB1) to block its interaction with collagen and hence prevent platelet stimulation. In terms of biological role, abolishes platelet aggregation induced by collagen (IC(50)=66 nM) but not ADP-stimulated platelet aggregation. This inhibition may be due to its ability to bind collagen and block the binding site on collagen for platelets and/or to its ability to bind to the platelet alpha-2/beta-1 collagen receptor (ITGA2/ITGB1) to block its interaction with collagen and hence prevent platelet stimulation. The sequence is that of Zinc metalloproteinase-disintegrin-like VAP2B from Crotalus atrox (Western diamondback rattlesnake).